The following is a 243-amino-acid chain: NifU-like scaffold protein (243 aa).

This sequence belongs to the NifU family. In terms of assembly, homodimer.

The protein localises to the plastid. Its subcellular location is the apicoplast. It participates in cofactor biosynthesis; iron-sulfur cluster biosynthesis. Binds and transfers [4Fe-4S] iron-sulfur clusters to target proteins. The polypeptide is NifU-like scaffold protein (Plasmodium berghei (strain Anka)).